Here is a 285-residue protein sequence, read N- to C-terminus: Kanamycin B dioxygenase (285 aa).

It belongs to the PhyH family. The cofactor is Fe cation.

It catalyses the reaction kanamycin B + 2-oxoglutarate + O2 = 2'-dehydrokanamycin A + succinate + NH4(+) + CO2. It functions in the pathway antibiotic biosynthesis; kanamycin biosynthesis. Its function is as follows. Mediates the conversion of kanamycin B into 2'-dehydrokanamycin A during the transformation of kanamycin B to kanamycin A. This chain is Kanamycin B dioxygenase (kanJ), found in Streptomyces kanamyceticus.